The sequence spans 369 residues: MAAPRDAEIHKDVQNYYGNVLKTSADLQTNACVTPAKGVPEYIRKSLQNVHEEVISRYYGCGLVVPEHLENCRILDLGSGSGRDCYVLSQLVGQKGHITGIDMTKVQVEVAKAYLEYHTEKFGFQTPNVTFLHGQIEMLAEAGIQKESYDIVISNCVINLVPDKQKVLREVYQVLKYGGELYFSDVYASLEVSEDIKSHKVLWGECLGGALYWKDLAVIAKKIGFCPPRLVTANIITVGNKELERVLGDCRFVSATFRLFKLPKTEPAGRCQVVYNGGIMGHEKELIFDANFTFKEGEAVEVDEETAAILRNSRFAHDFLFTPVEASLLAPQTKVIIRDPFKLAEESDKMKPRCAPEGTGGCCGKRKSC.

Serine 46 carries the phosphoserine modification.

The protein belongs to the methyltransferase superfamily. Arsenite methyltransferase family.

Its subcellular location is the cytoplasm. The protein resides in the cytosol. It catalyses the reaction arsenic triglutathione + [thioredoxin]-dithiol + S-adenosyl-L-methionine + 2 H2O = methylarsonous acid + [thioredoxin]-disulfide + 3 glutathione + S-adenosyl-L-homocysteine + H(+). The catalysed reaction is arsenic triglutathione + 2 [thioredoxin]-dithiol + 2 S-adenosyl-L-methionine + H2O = dimethylarsinous acid + 2 [thioredoxin]-disulfide + 3 glutathione + 2 S-adenosyl-L-homocysteine + 2 H(+). The enzyme catalyses arsenic triglutathione + 3 [thioredoxin]-dithiol + 3 S-adenosyl-L-methionine = trimethylarsine + 3 [thioredoxin]-disulfide + 3 glutathione + 3 S-adenosyl-L-homocysteine + 3 H(+). Its function is as follows. Catalyzes the transfer of a methyl group from AdoMet to trivalent arsenicals producing methylated and dimethylated arsenicals. It methylates arsenite to form methylarsonate, Me-AsO(3)H(2), which is reduced by methylarsonate reductase to methylarsonite, Me-As(OH)2. Methylarsonite is also a substrate and it is converted into the much less toxic compound dimethylarsinate (cacodylate), Me(2)As(O)-OH. The protein is Arsenite methyltransferase (As3mt) of Rattus norvegicus (Rat).